Here is a 233-residue protein sequence, read N- to C-terminus: Large ribosomal subunit protein uL1 (233 aa).

It belongs to the universal ribosomal protein uL1 family. Part of the 50S ribosomal subunit.

Functionally, binds directly to 23S rRNA. The L1 stalk is quite mobile in the ribosome, and is involved in E site tRNA release. In terms of biological role, protein L1 is also a translational repressor protein, it controls the translation of the L11 operon by binding to its mRNA. The sequence is that of Large ribosomal subunit protein uL1 from Paracoccus denitrificans (strain Pd 1222).